A 415-amino-acid chain; its full sequence is Multifunctional CCA protein (415 aa).

Positions 8 and 11 each coordinate ATP. Positions 8 and 11 each coordinate CTP. Glu-21 and Asp-23 together coordinate Mg(2+). ATP contacts are provided by Arg-91, Arg-137, and Arg-140. CTP contacts are provided by Arg-91, Arg-137, and Arg-140. Positions 228-329 constitute an HD domain; that stretch reads AGTHTLMALD…VELFEGLDLF (102 aa).

This sequence belongs to the tRNA nucleotidyltransferase/poly(A) polymerase family. Bacterial CCA-adding enzyme type 1 subfamily. In terms of assembly, monomer. Can also form homodimers and oligomers. The cofactor is Mg(2+). Ni(2+) is required as a cofactor.

The catalysed reaction is a tRNA precursor + 2 CTP + ATP = a tRNA with a 3' CCA end + 3 diphosphate. The enzyme catalyses a tRNA with a 3' CCA end + 2 CTP + ATP = a tRNA with a 3' CCACCA end + 3 diphosphate. In terms of biological role, catalyzes the addition and repair of the essential 3'-terminal CCA sequence in tRNAs without using a nucleic acid template. Adds these three nucleotides in the order of C, C, and A to the tRNA nucleotide-73, using CTP and ATP as substrates and producing inorganic pyrophosphate. tRNA 3'-terminal CCA addition is required both for tRNA processing and repair. Also involved in tRNA surveillance by mediating tandem CCA addition to generate a CCACCA at the 3' terminus of unstable tRNAs. While stable tRNAs receive only 3'-terminal CCA, unstable tRNAs are marked with CCACCA and rapidly degraded. The sequence is that of Multifunctional CCA protein from Halorhodospira halophila (strain DSM 244 / SL1) (Ectothiorhodospira halophila (strain DSM 244 / SL1)).